Consider the following 345-residue polypeptide: Nuclear distribution protein nudE-like 1 (345 aa).

A coiled-coil region spans residues 28-190 (QSFQEARDEL…LAVRERQQEV (163 aa)). A self-association region spans residues 56–166 (VQAEQRNRDL…LDEKESLLVS (111 aa)). The interval 64–189 (DLQADNQRLK…ELAVRERQQE (126 aa)) is interaction with KATNB1. Residues 114 to 133 (YVRELEQANDDLERAKRATI) are required for interaction with PAFAH1B1. The tract at residues 175 to 345 (RDLRQELAVR…SAPGMLPLSV (171 aa)) is interaction with CENPF. Residues 189-256 (EVTRKSAPSS…SARISALNIV (68 aa)) are interaction with YWHAE. The tract at residues 191 to 345 (TRKSAPSSPT…SAPGMLPLSV (155 aa)) is interaction with NEFL. An interaction with KATNA1 region spans residues 195–256 (APSSPTLDCE…SARISALNIV (62 aa)). At serine 215 the chain carries Phosphoserine. Threonine 219 bears the Phosphothreonine; by CDK1 and MAPK1 mark. Serine 231 bears the Phosphoserine mark. Positions 241–280 (TSPLTPSARISALNIVGDLLRKVGALESKLAACRNFAKDQ) are interaction with DISC1. Phosphoserine; by CDK1 is present on serine 242. The residue at position 245 (threonine 245) is a Phosphothreonine; by CDK1 and MAPK1. The tract at residues 256-291 (VGDLLRKVGALESKLAACRNFAKDQASRKSYISGNV) is required for localization to the centrosome and interaction with dynein, dynactin, tubulin gamma, PCM1 and PCNT. The S-palmitoyl cysteine; by ZDHHC2, ZDHHC3 and ZDHHC7 moiety is linked to residue cysteine 273. Residues 315 to 345 (GAVNGFDPAPPPPGLGSSRPSSAPGMLPLSV) form a disordered region. A compositionally biased stretch (low complexity) spans 329 to 339 (LGSSRPSSAPG). Serine 344 carries the post-translational modification Phosphoserine.

Belongs to the nudE family. In terms of assembly, interacts with PLEKHM1 (via N- and C-terminus). Interacts with YWHAE. Interacts directly with NEFL and indirectly with NEFH. Interacts with microtubules. Self-associates. Interacts with DISC1, dynein, dynactin, tubulin gamma, KATNA1, KATNB1, PAFAH1B1, PCM1 and PCNT. Interacts (via C-terminus) with CENPF. Interacts with ZNF365. Interacts with GTP-bound RAB9A; the interaction may lead to RAB9A-dynein motor tethering. Post-translationally, phosphorylated in mitosis. Can be phosphorylated by CDK1, CDK5 and MAPK1. Phosphorylation by CDK5 promotes interaction with KATNA1 and YWHAE. Palmitoylation at Cys-273 reduces affinity for dynein. As to expression, expressed in brain, heart, kidney, liver, lung, pancreas, placenta and skeletal muscle.

The protein localises to the cytoplasm. Its subcellular location is the cytoskeleton. It is found in the microtubule organizing center. The protein resides in the centrosome. It localises to the chromosome. The protein localises to the centromere. Its subcellular location is the kinetochore. It is found in the spindle. In terms of biological role, required for organization of the cellular microtubule array and microtubule anchoring at the centrosome. May regulate microtubule organization at least in part by targeting the microtubule severing protein KATNA1 to the centrosome. Also positively regulates the activity of the minus-end directed microtubule motor protein dynein. May enhance dynein-mediated microtubule sliding by targeting dynein to the microtubule plus ends. Required for several dynein- and microtubule-dependent processes such as the maintenance of Golgi integrity, the centripetal motion of secretory vesicles and the coupling of the nucleus and centrosome. Also required during brain development for the migration of newly formed neurons from the ventricular/subventricular zone toward the cortical plate. Plays a role, together with DISC1, in the regulation of neurite outgrowth. Required for mitosis in some cell types but appears to be dispensible for mitosis in cortical neuronal progenitors, which instead requires NDE1. Facilitates the polymerization of neurofilaments from the individual subunits NEFH and NEFL. Positively regulates lysosome peripheral distribution and ruffled border formation in osteoclasts. Plays a role, together with DISC1, in the regulation of neurite outgrowth. May act as a RAB9A/B effector that tethers RAB9-associated late endosomes to the dynein motor for their retrograde transport to the trans-Golgi network. The protein is Nuclear distribution protein nudE-like 1 (NDEL1) of Homo sapiens (Human).